The primary structure comprises 312 residues: Sulfate adenylyltransferase subunit 2 (312 aa).

This sequence belongs to the PAPS reductase family. CysD subfamily. Heterodimer composed of CysD, the smaller subunit, and CysN.

The catalysed reaction is sulfate + ATP + H(+) = adenosine 5'-phosphosulfate + diphosphate. The protein operates within sulfur metabolism; hydrogen sulfide biosynthesis; sulfite from sulfate: step 1/3. With CysN forms the ATP sulfurylase (ATPS) that catalyzes the adenylation of sulfate producing adenosine 5'-phosphosulfate (APS) and diphosphate, the first enzymatic step in sulfur assimilation pathway. APS synthesis involves the formation of a high-energy phosphoric-sulfuric acid anhydride bond driven by GTP hydrolysis by CysN coupled to ATP hydrolysis by CysD. The protein is Sulfate adenylyltransferase subunit 2 of Methylobacterium nodulans (strain LMG 21967 / CNCM I-2342 / ORS 2060).